Here is a 286-residue protein sequence, read N- to C-terminus: Bifunctional protein FolD (286 aa).

Residues 166–168 and isoleucine 232 each bind NADP(+); that span reads GAS.

The protein belongs to the tetrahydrofolate dehydrogenase/cyclohydrolase family. As to quaternary structure, homodimer.

The catalysed reaction is (6R)-5,10-methylene-5,6,7,8-tetrahydrofolate + NADP(+) = (6R)-5,10-methenyltetrahydrofolate + NADPH. The enzyme catalyses (6R)-5,10-methenyltetrahydrofolate + H2O = (6R)-10-formyltetrahydrofolate + H(+). It functions in the pathway one-carbon metabolism; tetrahydrofolate interconversion. Functionally, catalyzes the oxidation of 5,10-methylenetetrahydrofolate to 5,10-methenyltetrahydrofolate and then the hydrolysis of 5,10-methenyltetrahydrofolate to 10-formyltetrahydrofolate. This is Bifunctional protein FolD from Vibrio parahaemolyticus serotype O3:K6 (strain RIMD 2210633).